Consider the following 526-residue polypeptide: MPDSKYTMQGYNLVKLLKRLEEATARLEDVTIYQEGYIQNKLEASKNNKPSDSGADANTTNEPSAENAPEVEQDPKCITAFQSYIGENIDPLVELSGKIDTVVLDALQLLKGGFQSQLTFLRAAVRSRKPDYSSQTFADSLRPINENIIKLGQLKESNRQSKYFAYLSALSEGAPLFSWVAVDTPVSMVTDFKDAAQFWTNRILKEYRESDPNAVEWVKKFLASFDNLKAYIKEYHTTGVSWKKDGMDFADAMAQSTKNTGATSSPSPASATAAPAPPPPPPAPPASVFEISNDTPATSSDANKGGIGAVFAELNQGENITKGLKKVDKSQQTHKNPELRQSSTVSSTGSKSGPPPRPKKPSTLKTKRPPRKELVGNKWFIENYENETESLVIDANKDESIFIGKCSQVLVQIKGKVNAISLSETESCSVVLDSSISGMDVIKSNKFGIQVNHSLPQISIDKSDGGNIYLSKESLNTEIYTSCSTAINVNLPIGEDDDYVEFPIPEQMKHSFADGKFKSAVFEHAG.

An adenyl cyclase-binding region spans residues 1–168 (MPDSKYTMQG…RQSKYFAYLS (168 aa)). Disordered regions lie at residues 43–72 (EASKNNKPSDSGADANTTNEPSAENAPEVE), 255–304 (QSTK…DANK), and 326–371 (KVDK…RPPR). Polar residues predominate over residues 45–64 (SKNNKPSDSGADANTTNEPS). The SH3-binding motif lies at 169–369 (ALSEGAPLFS…KPSTLKTKRP (201 aa)). The span at 262–274 (ATSSPSPASATAA) shows a compositional bias: low complexity. Pro residues predominate over residues 275-285 (PAPPPPPPAPP). The segment covering 290 to 302 (EISNDTPATSSDA) has biased composition (polar residues). Residues 326–338 (KVDKSQQTHKNPE) are compositionally biased toward basic and acidic residues. Residues 342 to 352 (SSTVSSTGSKS) show a composition bias toward low complexity. Positions 354 to 361 (PPPRPKKP) are interaction with SH3 domain of ABP1. Over residues 357 to 370 (RPKKPSTLKTKRPP) the composition is skewed to basic residues. The region spanning 369–504 (PPRKELVGNK…EDDDYVEFPI (136 aa)) is the C-CAP/cofactor C-like domain. The segment at 370-526 (PRKELVGNKW…FKSAVFEHAG (157 aa)) is dimerization and actin-binding. At serine 454 the chain carries Phosphoserine.

The protein belongs to the CAP family. In terms of assembly, homodimer.

It is found in the cytoplasm. The protein localises to the cytoskeleton. Its subcellular location is the actin patch. Functionally, the N-terminal domain binds to adenylyl cyclase, thereby enabling adenylyl cyclase to be activated by upstream regulatory signals, such as Ras. The C-terminal domain is required for normal cellular morphology and growth control. In Saccharomyces cerevisiae (strain ATCC 204508 / S288c) (Baker's yeast), this protein is Adenylyl cyclase-associated protein (SRV2).